The chain runs to 945 residues: Isoleucine--tRNA ligase (945 aa).

The 'HIGH' region motif lies at 66–76 (PYANGDIHLGH). Glu-581 serves as a coordination point for L-isoleucyl-5'-AMP. The short motif at 622-626 (KMSKS) is the 'KMSKS' region element. Lys-625 is a binding site for ATP. Zn(2+) contacts are provided by Cys-908, Cys-911, Cys-928, and Cys-931.

This sequence belongs to the class-I aminoacyl-tRNA synthetase family. IleS type 1 subfamily. Monomer. The cofactor is Zn(2+).

The protein resides in the cytoplasm. The catalysed reaction is tRNA(Ile) + L-isoleucine + ATP = L-isoleucyl-tRNA(Ile) + AMP + diphosphate. Catalyzes the attachment of isoleucine to tRNA(Ile). As IleRS can inadvertently accommodate and process structurally similar amino acids such as valine, to avoid such errors it has two additional distinct tRNA(Ile)-dependent editing activities. One activity is designated as 'pretransfer' editing and involves the hydrolysis of activated Val-AMP. The other activity is designated 'posttransfer' editing and involves deacylation of mischarged Val-tRNA(Ile). This chain is Isoleucine--tRNA ligase, found in Burkholderia cenocepacia (strain ATCC BAA-245 / DSM 16553 / LMG 16656 / NCTC 13227 / J2315 / CF5610) (Burkholderia cepacia (strain J2315)).